Here is a 143-residue protein sequence, read N- to C-terminus: Nucleoside diphosphate kinase (143 aa).

Residues lysine 11, phenylalanine 59, arginine 87, threonine 93, arginine 104, and asparagine 114 each coordinate ATP. Histidine 117 functions as the Pros-phosphohistidine intermediate in the catalytic mechanism.

This sequence belongs to the NDK family. As to quaternary structure, homotetramer. It depends on Mg(2+) as a cofactor.

It localises to the cytoplasm. The catalysed reaction is a 2'-deoxyribonucleoside 5'-diphosphate + ATP = a 2'-deoxyribonucleoside 5'-triphosphate + ADP. It catalyses the reaction a ribonucleoside 5'-diphosphate + ATP = a ribonucleoside 5'-triphosphate + ADP. Functionally, major role in the synthesis of nucleoside triphosphates other than ATP. The ATP gamma phosphate is transferred to the NDP beta phosphate via a ping-pong mechanism, using a phosphorylated active-site intermediate. The polypeptide is Nucleoside diphosphate kinase (Pseudoalteromonas translucida (strain TAC 125)).